Consider the following 210-residue polypeptide: Urease accessory protein UreG (210 aa).

14 to 21 (GPVGSGKT) is a binding site for GTP.

It belongs to the SIMIBI class G3E GTPase family. UreG subfamily. Homodimer. UreD, UreF and UreG form a complex that acts as a GTP-hydrolysis-dependent molecular chaperone, activating the urease apoprotein by helping to assemble the nickel containing metallocenter of UreC. The UreE protein probably delivers the nickel.

Its subcellular location is the cytoplasm. Facilitates the functional incorporation of the urease nickel metallocenter. This process requires GTP hydrolysis, probably effectuated by UreG. This Rhodopseudomonas palustris (strain BisA53) protein is Urease accessory protein UreG.